The sequence spans 644 residues: Core protein VP4 (644 aa).

Belongs to the orbivirus VP4 family.

The protein localises to the virion. In terms of biological role, the VP4 protein is one of the five proteins (with VP1, VP3, VP6 and VP7) which form the inner capsid of the virus. The sequence is that of Core protein VP4 (Segment-4) from Bluetongue virus 2 (isolate USA) (BTV 2).